A 147-amino-acid chain; its full sequence is D-aminoacyl-tRNA deacylase (147 aa).

The Gly-cisPro motif, important for rejection of L-amino acids signature appears at 136-137 (GP).

Belongs to the DTD family. In terms of assembly, homodimer.

The protein resides in the cytoplasm. It catalyses the reaction glycyl-tRNA(Ala) + H2O = tRNA(Ala) + glycine + H(+). It carries out the reaction a D-aminoacyl-tRNA + H2O = a tRNA + a D-alpha-amino acid + H(+). Its function is as follows. An aminoacyl-tRNA editing enzyme that deacylates mischarged D-aminoacyl-tRNAs. Also deacylates mischarged glycyl-tRNA(Ala), protecting cells against glycine mischarging by AlaRS. Acts via tRNA-based rather than protein-based catalysis; rejects L-amino acids rather than detecting D-amino acids in the active site. By recycling D-aminoacyl-tRNA to D-amino acids and free tRNA molecules, this enzyme counteracts the toxicity associated with the formation of D-aminoacyl-tRNA entities in vivo and helps enforce protein L-homochirality. This Streptococcus uberis (strain ATCC BAA-854 / 0140J) protein is D-aminoacyl-tRNA deacylase.